We begin with the raw amino-acid sequence, 704 residues long: Acetate--CoA ligase [ADP-forming] (704 aa).

It in the N-terminal section; belongs to the acetate CoA ligase alpha subunit family. In the C-terminal section; belongs to the acetate CoA ligase beta subunit family. Homodimer.

The catalysed reaction is acetate + ATP + CoA = acetyl-CoA + ADP + phosphate. Catalyzes the formation of acetate and ATP from acetyl-CoA by using ADP and phosphate. Can also use butyryl-CoA, but not phenylacetyl-CoA. Cannot catalyze the reverse reaction. The protein is Acetate--CoA ligase [ADP-forming] of Methanocaldococcus jannaschii (strain ATCC 43067 / DSM 2661 / JAL-1 / JCM 10045 / NBRC 100440) (Methanococcus jannaschii).